Here is a 379-residue protein sequence, read N- to C-terminus: Sperm microtubule associated protein 2 (379 aa).

The disordered stretch occupies residues 1 to 82; the sequence is MGDSRRRSLG…EFPETLDPKE (82 aa). Composition is skewed to basic and acidic residues over residues 19 to 29 and 38 to 50; these read GRSEREQDGDP and ESRR…RQDL. The segment covering 56–76 has biased composition (acidic residues); that stretch reads GPEDPEEELPPEEVAGEEFPE. THEG repeat units lie at residues 118 to 137, 184 to 203, 222 to 241, 258 to 277, 290 to 309, and 326 to 345; these read KARK…PKIN, TITV…PKRF, SSLE…PKIR, AAQM…PKAP, PKPH…PKAQ, and VTKK…PKVR. Ser-295 bears the Phosphoserine mark. The interval 344–379 is disordered; sequence VRKGLNEGYDRRPLASMSLPPPKASPEKCDQPRPGL. 2 stretches are compositionally biased toward basic and acidic residues: residues 347–356 and 368–379; these read GLNEGYDRRP and SPEKCDQPRPGL.

As to quaternary structure, interacts with CCT5. In terms of tissue distribution, testis specific.

The protein localises to the nucleus. In terms of biological role, may be involved (but not essential) in spermatogenesis. The chain is Sperm microtubule associated protein 2 from Homo sapiens (Human).